Here is a 502-residue protein sequence, read N- to C-terminus: ATP synthase subunit alpha (502 aa).

An ATP-binding site is contributed by 169–176; sequence GDRQTGKT.

The protein belongs to the ATPase alpha/beta chains family. F-type ATPases have 2 components, CF(1) - the catalytic core - and CF(0) - the membrane proton channel. CF(1) has five subunits: alpha(3), beta(3), gamma(1), delta(1), epsilon(1). CF(0) has three main subunits: a(1), b(2) and c(9-12). The alpha and beta chains form an alternating ring which encloses part of the gamma chain. CF(1) is attached to CF(0) by a central stalk formed by the gamma and epsilon chains, while a peripheral stalk is formed by the delta and b chains.

It is found in the cell inner membrane. It carries out the reaction ATP + H2O + 4 H(+)(in) = ADP + phosphate + 5 H(+)(out). Functionally, produces ATP from ADP in the presence of a proton gradient across the membrane. The alpha chain is a regulatory subunit. This Pelobacter propionicus (strain DSM 2379 / NBRC 103807 / OttBd1) protein is ATP synthase subunit alpha.